Here is a 261-residue protein sequence, read N- to C-terminus: Zinc import ATP-binding protein ZnuC (261 aa).

Residues 6-221 form the ABC transporter domain; the sequence is IRLEKVAVRF…PAFVELFGNN (216 aa). 38–45 lines the ATP pocket; the sequence is GPNGAGKT.

Belongs to the ABC transporter superfamily. Zinc importer (TC 3.A.1.15.5) family. The complex is composed of two ATP-binding proteins (ZnuC), two transmembrane proteins (ZnuB) and a solute-binding protein (ZnuA).

Its subcellular location is the cell inner membrane. It carries out the reaction Zn(2+)(out) + ATP(in) + H2O(in) = Zn(2+)(in) + ADP(in) + phosphate(in) + H(+)(in). Functionally, part of the ABC transporter complex ZnuABC involved in zinc import. Responsible for energy coupling to the transport system. This is Zinc import ATP-binding protein ZnuC from Pseudomonas fluorescens (strain Pf0-1).